The primary structure comprises 369 residues: Protein-glutamate methylesterase/protein-glutamine glutaminase 1 (369 aa).

A Response regulatory domain is found at 11 to 128 (RVLIVDDSAA…DLERQEASIR (118 aa)). Asp62 is modified (4-aspartylphosphate). The interval 136 to 168 (ATETTRRRSQPEPRPLAPGPKLTADEILPARPP) is disordered. The CheB-type methylesterase domain occupies 170–358 (PVPETMPVVC…LDRLAARIME (189 aa)). Active-site residues include Ser183, His209, and Asp305.

It belongs to the CheB family. In terms of processing, phosphorylated by CheA. Phosphorylation of the N-terminal regulatory domain activates the methylesterase activity.

It is found in the cytoplasm. It carries out the reaction [protein]-L-glutamate 5-O-methyl ester + H2O = L-glutamyl-[protein] + methanol + H(+). The catalysed reaction is L-glutaminyl-[protein] + H2O = L-glutamyl-[protein] + NH4(+). Functionally, involved in chemotaxis. Part of a chemotaxis signal transduction system that modulates chemotaxis in response to various stimuli. Catalyzes the demethylation of specific methylglutamate residues introduced into the chemoreceptors (methyl-accepting chemotaxis proteins or MCP) by CheR. Also mediates the irreversible deamidation of specific glutamine residues to glutamic acid. In Cereibacter sphaeroides (strain ATCC 17023 / DSM 158 / JCM 6121 / CCUG 31486 / LMG 2827 / NBRC 12203 / NCIMB 8253 / ATH 2.4.1.) (Rhodobacter sphaeroides), this protein is Protein-glutamate methylesterase/protein-glutamine glutaminase 1.